The chain runs to 159 residues: Ribosomal RNA large subunit methyltransferase H (159 aa).

S-adenosyl-L-methionine contacts are provided by residues L76, G108, and 127 to 132; that span reads FSKMTF.

Belongs to the RNA methyltransferase RlmH family. Homodimer.

The protein resides in the cytoplasm. The enzyme catalyses pseudouridine(1915) in 23S rRNA + S-adenosyl-L-methionine = N(3)-methylpseudouridine(1915) in 23S rRNA + S-adenosyl-L-homocysteine + H(+). Functionally, specifically methylates the pseudouridine at position 1915 (m3Psi1915) in 23S rRNA. This chain is Ribosomal RNA large subunit methyltransferase H, found in Clostridium kluyveri (strain NBRC 12016).